The chain runs to 248 residues: Small ribosomal subunit protein uS2 (248 aa).

It belongs to the universal ribosomal protein uS2 family.

This is Small ribosomal subunit protein uS2 from Cupriavidus necator (strain ATCC 17699 / DSM 428 / KCTC 22496 / NCIMB 10442 / H16 / Stanier 337) (Ralstonia eutropha).